Reading from the N-terminus, the 856-residue chain is Phospholipase D gamma 2 (856 aa).

Residues P21–F161 enclose the C2 domain. D223 contributes to the Ca(2+) binding site. The 36-residue stretch at T362–R397 folds into the PLD phosphodiesterase 1 domain. Active-site residues include H367, K369, and D374. H367 is an a 1,2-diacyl-sn-glycero-3-phosphate binding site. The Ca(2+) site is built by H403 and H435. A 1,2-diacyl-sn-glycero-3-phosphate-binding residues include Q562 and H707. A PLD phosphodiesterase 2 domain is found at F702–S729. Residues H707, K709, and D714 contribute to the active site. Residue E770 participates in Ca(2+) binding.

The protein belongs to the phospholipase D family. C2-PLD subfamily. The cofactor is Ca(2+). In terms of tissue distribution, highly expressed in roots and flowers, moderately in stems, leaves and seedlings and low in siliques. Not detected in seeds.

It localises to the cytoplasm. The protein localises to the membrane. It catalyses the reaction a 1,2-diacyl-sn-glycero-3-phosphocholine + H2O = a 1,2-diacyl-sn-glycero-3-phosphate + choline + H(+). Inhibited by neomycin. Hydrolyzes glycerol-phospholipids at the terminal phosphodiesteric bond to generate phosphatidic acids (PA). Plays an important role in various cellular processes, including phytohormone action, vesicular trafficking, secretion, cytoskeletal arrangement, meiosis, tumor promotion, pathogenesis, membrane deterioration and senescence. Can use phosphatidylserine but prefers ethanolamine-containing lipids as substrates. Can use phosphatidylcholine (PC) as substrates in the presence of phosphatidylethanolamine (PE) and PIP2. Involved in membrane lipid modulation under aluminum (Al) stress and negatively modulate plant tolerance to Al. The sequence is that of Phospholipase D gamma 2 from Arabidopsis thaliana (Mouse-ear cress).